Reading from the N-terminus, the 862-residue chain is Kinesin-like protein KIN-7J (862 aa).

Residues 9–331 (RIVVSVRLRP…LLFANCAKDV (323 aa)) form the Kinesin motor domain. 95 to 102 (GQTSSGKT) lines the ATP pocket. Residues 340 to 415 (VMSDKALVKH…NFRKVASDGD (76 aa)) adopt a coiled-coil conformation. 2 stretches are compositionally biased toward basic and acidic residues: residues 475-499 (EEHE…KEVQ) and 518-531 (PEKK…KHSE). Disordered regions lie at residues 475 to 532 (EEHE…HSES) and 596 to 643 (DDSA…STCN). Residues 598 to 610 (SASTTPSSETFRY) show a composition bias toward polar residues. The span at 613 to 629 (RRPEKVRKSLSPDEIAD) shows a compositional bias: basic and acidic residues.

This sequence belongs to the TRAFAC class myosin-kinesin ATPase superfamily. Kinesin family. KIN-7 subfamily.

This is Kinesin-like protein KIN-7J from Oryza sativa subsp. japonica (Rice).